The following is a 244-amino-acid chain: Probable transcriptional regulatory protein TT_C0469 (244 aa).

It belongs to the TACO1 family.

The protein localises to the cytoplasm. The protein is Probable transcriptional regulatory protein TT_C0469 of Thermus thermophilus (strain ATCC BAA-163 / DSM 7039 / HB27).